Reading from the N-terminus, the 165-residue chain is Ribosome maturation factor RimM (165 aa).

The PRC barrel domain maps to 94 to 165 (EDEFYIADLT…YVILNYQREA (72 aa)).

Belongs to the RimM family. As to quaternary structure, binds ribosomal protein uS19.

It is found in the cytoplasm. In terms of biological role, an accessory protein needed during the final step in the assembly of 30S ribosomal subunit, possibly for assembly of the head region. Essential for efficient processing of 16S rRNA. May be needed both before and after RbfA during the maturation of 16S rRNA. It has affinity for free ribosomal 30S subunits but not for 70S ribosomes. The chain is Ribosome maturation factor RimM from Rickettsia rickettsii (strain Iowa).